A 96-amino-acid polypeptide reads, in one-letter code: Glutamyl-tRNA(Gln) amidotransferase subunit C (96 aa).

This sequence belongs to the GatC family. As to quaternary structure, heterotrimer of A, B and C subunits.

The catalysed reaction is L-glutamyl-tRNA(Gln) + L-glutamine + ATP + H2O = L-glutaminyl-tRNA(Gln) + L-glutamate + ADP + phosphate + H(+). The enzyme catalyses L-aspartyl-tRNA(Asn) + L-glutamine + ATP + H2O = L-asparaginyl-tRNA(Asn) + L-glutamate + ADP + phosphate + 2 H(+). Its function is as follows. Allows the formation of correctly charged Asn-tRNA(Asn) or Gln-tRNA(Gln) through the transamidation of misacylated Asp-tRNA(Asn) or Glu-tRNA(Gln) in organisms which lack either or both of asparaginyl-tRNA or glutaminyl-tRNA synthetases. The reaction takes place in the presence of glutamine and ATP through an activated phospho-Asp-tRNA(Asn) or phospho-Glu-tRNA(Gln). This is Glutamyl-tRNA(Gln) amidotransferase subunit C from Halalkalibacterium halodurans (strain ATCC BAA-125 / DSM 18197 / FERM 7344 / JCM 9153 / C-125) (Bacillus halodurans).